Reading from the N-terminus, the 266-residue chain is Thymidylate synthase (266 aa).

Arg-24 lines the dUMP pocket. His-54 provides a ligand contact to (6R)-5,10-methylene-5,6,7,8-tetrahydrofolate. 129–130 (RR) lines the dUMP pocket. Cys-149 (nucleophile) is an active-site residue. DUMP is bound by residues 169–172 (RSAD), Asn-180, and 210–212 (HIY). Asp-172 is a binding site for (6R)-5,10-methylene-5,6,7,8-tetrahydrofolate. Ala-265 is a binding site for (6R)-5,10-methylene-5,6,7,8-tetrahydrofolate.

The protein belongs to the thymidylate synthase family. Bacterial-type ThyA subfamily. In terms of assembly, homodimer.

It is found in the cytoplasm. It carries out the reaction dUMP + (6R)-5,10-methylene-5,6,7,8-tetrahydrofolate = 7,8-dihydrofolate + dTMP. Its pathway is pyrimidine metabolism; dTTP biosynthesis. Functionally, catalyzes the reductive methylation of 2'-deoxyuridine-5'-monophosphate (dUMP) to 2'-deoxythymidine-5'-monophosphate (dTMP) while utilizing 5,10-methylenetetrahydrofolate (mTHF) as the methyl donor and reductant in the reaction, yielding dihydrofolate (DHF) as a by-product. This enzymatic reaction provides an intracellular de novo source of dTMP, an essential precursor for DNA biosynthesis. This is Thymidylate synthase from Mycobacterium ulcerans (strain Agy99).